Reading from the N-terminus, the 158-residue chain is Transcription elongation factor GreA (158 aa).

Positions 10 to 75 (TKEGKEKLEQ…QMLENMIRNA (66 aa)) form a coiled coil.

The protein belongs to the GreA/GreB family.

Its function is as follows. Necessary for efficient RNA polymerase transcription elongation past template-encoded arresting sites. The arresting sites in DNA have the property of trapping a certain fraction of elongating RNA polymerases that pass through, resulting in locked ternary complexes. Cleavage of the nascent transcript by cleavage factors such as GreA or GreB allows the resumption of elongation from the new 3'terminus. GreA releases sequences of 2 to 3 nucleotides. In Geobacillus kaustophilus (strain HTA426), this protein is Transcription elongation factor GreA.